The chain runs to 175 residues: Endoribonuclease YbeY (175 aa).

Zn(2+) is bound by residues His121, His125, and His131. The segment at 154 to 175 (PDPYSPAQQESQAQPENTELNP) is disordered. The span at 159 to 175 (PAQQESQAQPENTELNP) shows a compositional bias: polar residues.

Belongs to the endoribonuclease YbeY family. The cofactor is Zn(2+).

It localises to the cytoplasm. Its function is as follows. Single strand-specific metallo-endoribonuclease involved in late-stage 70S ribosome quality control and in maturation of the 3' terminus of the 16S rRNA. The polypeptide is Endoribonuclease YbeY (Alcanivorax borkumensis (strain ATCC 700651 / DSM 11573 / NCIMB 13689 / SK2)).